The following is a 1347-amino-acid chain: Protocadherin-11 X-linked (1347 aa).

Residues 1–23 (MDLLSGTYIFAVLLACVVFHSGA) form the signal peptide. Residues 24-812 (QEKNYTIREE…VSSPTSDYVK (789 aa)) are Extracellular-facing. 7 Cadherin domains span residues 26 to 139 (KNYT…APLF), 140 to 249 (PATV…HPVF), 250 to 355 (KETE…VPSI), 362 to 466 (NPVN…APVF), 467 to 570 (TQSF…SPVF), 571 to 673 (THNE…KPVF), and 677 to 795 (PSNY…APVT). Residues Asn-27, Asn-48, and Asn-54 are each glycosylated (N-linked (GlcNAc...) asparagine). Asn-344 carries an N-linked (GlcNAc...) asparagine glycan. A glycan (N-linked (GlcNAc...) asparagine) is linked at Asn-553. A glycan (N-linked (GlcNAc...) asparagine) is linked at Asn-773. The helical transmembrane segment at 813–833 (ILVAAVAGTITVVVVIFITAV) threads the bilayer. The Cytoplasmic segment spans residues 834-1347 (VRCRQAPHLK…DSPVMEEHPL (514 aa)). 3 disordered regions span residues 1057–1091 (LPEG…GYPQ), 1097–1116 (RATP…ESTF), and 1325–1347 (TFTP…EHPL).

It is found in the cell membrane. Potential calcium-dependent cell-adhesion protein. The protein is Protocadherin-11 X-linked (PCDH11X) of Pan paniscus (Pygmy chimpanzee).